A 357-amino-acid polypeptide reads, in one-letter code: Neurogenic differentiation factor 1 (357 aa).

Residues M1 to A94 are disordered. The segment covering E58 to D78 has biased composition (acidic residues). Residues P81–K93 show a composition bias toward basic residues. A Nuclear localization signal motif is present at residues K87–K93. A bHLH domain is found at L101–L153. 4 positions are modified to phosphoserine: S162, S259, S266, and S274. S336 is subject to Phosphoserine; by CaMK2.

In terms of assembly, efficient DNA-binding requires dimerization with another bHLH protein. Heterodimer with TCF3/E47; the heterodimer is inhibited in presence of ID2, but not NR0B2, to E-box element. Interacts with EP300; the interaction is inhibited by NR0B2. Interacts with RREB1. Interacts with ATOH8. In terms of processing, phosphorylated by MAPK1; phosphorylation regulates heterodimerization and DNA-binding activities. Phosphorylation on Ser-266 and Ser-274 increases transactivation on the insulin promoter in glucose-stimulated insulinoma cells. Phosphorylated. In islet cells, phosphorylated on Ser-274 upon glucose stimulation; which may be required for nuclear localization. In activated neurons, phosphorylated on Ser-336 by CaMK2; which promotes dendritic growth.

The protein resides in the cytoplasm. It is found in the nucleus. In terms of biological role, acts as a transcriptional activator: mediates transcriptional activation by binding to E box-containing promoter consensus core sequences 5'-CANNTG-3'. Associates with the p300/CBP transcription coactivator complex to stimulate transcription of the secretin gene as well as the gene encoding the cyclin-dependent kinase inhibitor CDKN1A. Contributes to the regulation of several cell differentiation pathways, like those that promote the formation of early retinal ganglion cells, inner ear sensory neurons, granule cells forming either the cerebellum or the dentate gyrus cell layer of the hippocampus, endocrine islet cells of the pancreas and enteroendocrine cells of the small intestine. Together with PAX6 or SIX3, is required for the regulation of amacrine cell fate specification. Also required for dendrite morphogenesis and maintenance in the cerebellar cortex. Associates with chromatin to enhancer regulatory elements in genes encoding key transcriptional regulators of neurogenesis. The protein is Neurogenic differentiation factor 1 (Neurod1) of Rattus norvegicus (Rat).